A 212-amino-acid polypeptide reads, in one-letter code: 3-isopropylmalate dehydratase small subunit 2 (212 aa).

Belongs to the LeuD family. LeuD type 1 subfamily. Heterodimer of LeuC and LeuD.

The enzyme catalyses (2R,3S)-3-isopropylmalate = (2S)-2-isopropylmalate. Its pathway is amino-acid biosynthesis; L-leucine biosynthesis; L-leucine from 3-methyl-2-oxobutanoate: step 2/4. Its function is as follows. Catalyzes the isomerization between 2-isopropylmalate and 3-isopropylmalate, via the formation of 2-isopropylmaleate. This chain is 3-isopropylmalate dehydratase small subunit 2, found in Chromobacterium violaceum (strain ATCC 12472 / DSM 30191 / JCM 1249 / CCUG 213 / NBRC 12614 / NCIMB 9131 / NCTC 9757 / MK).